We begin with the raw amino-acid sequence, 642 residues long: Mediator of RNA polymerase II transcription subunit 17 (642 aa).

The tract at residues 210–232 (AEETGDEDTASSSNSSSSVSGNN) is disordered. Over residues 220–232 (SSSNSSSSVSGNN) the composition is skewed to low complexity.

This sequence belongs to the Mediator complex subunit 17 family. As to quaternary structure, component of the Mediator complex, which includes at least CDK8, MED4, MED6, MED11, MED14, MED17, MED18, MED20, MED21, MED22, MED27, MED28, MED30 and MED31. Interacts with Hsf.

The protein resides in the nucleus. It localises to the chromosome. Its function is as follows. Component of the Mediator complex, a coactivator involved in the regulated transcription of nearly all RNA polymerase II-dependent genes. Mediator functions as a bridge to convey information from gene-specific regulatory proteins to the basal RNA polymerase II transcription machinery. Mediator is recruited to promoters by direct interactions with regulatory proteins and serves as a scaffold for the assembly of a functional preinitiation complex with RNA polymerase II and the general transcription factors. Required for activated transcription of the MtnA, MtnB and MtnD genes. Negatively regulates sex comb development. The polypeptide is Mediator of RNA polymerase II transcription subunit 17 (MED17) (Drosophila melanogaster (Fruit fly)).